The chain runs to 180 residues: Adenine phosphoribosyltransferase (180 aa).

At Ser-2 the chain carries N-acetylserine. Phosphoserine occurs at positions 15 and 30. The residue at position 60 (Tyr-60) is a Phosphotyrosine. Ser-66 carries the phosphoserine modification. Lys-114 carries the post-translational modification N6-acetyllysine. Thr-135 is modified (phosphothreonine).

The protein belongs to the purine/pyrimidine phosphoribosyltransferase family. Homodimer.

It localises to the cytoplasm. The catalysed reaction is AMP + diphosphate = 5-phospho-alpha-D-ribose 1-diphosphate + adenine. Its pathway is purine metabolism; AMP biosynthesis via salvage pathway; AMP from adenine: step 1/1. In terms of biological role, catalyzes a salvage reaction resulting in the formation of AMP, that is energically less costly than de novo synthesis. The polypeptide is Adenine phosphoribosyltransferase (Stochomys longicaudatus (Target rat)).